The following is a 484-amino-acid chain: Transcription factor MYB88 (484 aa).

The disordered stretch occupies residues 1–20 (MEETTKQNNMKKKKKILLHS). Residues 13–20 (KKKILLHS) carry the Nuclear localization signal motif. 2 HTH myb-type domains span residues 25–76 (KKER…YTYL) and 77–131 (NSDF…KKRA). 2 DNA-binding regions (H-T-H motif) span residues 53–76 (WAIIASKFNDKSTRQCRRRWYTYL) and 104–127 (WTEIAKVVSGRTDNAVKNRFTTLC). Disordered stretches follow at residues 215-241 (NATSSDGTEEQKQIGNVKESDGEDKSN), 321-383 (RSSN…GGEL), and 458-484 (GVESPSPYPSANPSQPPPCKRVLLDSL). A compositionally biased stretch (basic and acidic residues) spans 232–241 (KESDGEDKSN). Residues 339–348 (SPASSEYSSG) show a composition bias toward low complexity. Positions 354–380 (TIMTHPSGDKTQQLMSDTQTTSHQQNG) are enriched in polar residues. Residues 463–476 (SPYPSANPSQPPPC) are compositionally biased toward pro residues.

In terms of assembly, interacts with RBR1. In terms of tissue distribution, expressed at low levels in all organs including roots, leaves, hypocotyls stems, flowers, siliques and buds.

The protein localises to the nucleus. Its function is as follows. Transcription factor that binds to DNA in promoters cis-regulatory element 5'-GGCGCGC-3' of cell cycle genes, including cyclins, cyclin-dependent kinases (CDKs), and components of the pre-replication complex. Binds to DNA in promoters cis-regulatory element 5'-AGCCG-3' of auxin regulated genes (e.g. PIN3 and PIN7). Together with FAMA and MYB124, ensures that stomata contain just two guard cells (GCs) by enforcing a single symmetric precursor cell division before stomatal maturity. Represses the expression of the mitosis-inducing factors CDKB1-1 and CDKA-1, specifically required for the last guard mother cells (GMC) symmetric divisions in the stomatal pathway. Represses CYCA2-3 in newly formed guard cells. Together with MYB88, regulates stomata spacing by restricting divisions late in the stomatal cell lineage thus limiting the number of GMC divisions. In collaboration with CDKB1-1 and CDKB1-2, restrict the G1/S transition and chloroplast and nuclear number during stomatal formation, and normally maintain fate and developmental progression throughout the stomatal cell lineage. Involved in sensing and/or transducing abiotic stress (e.g. drought and salt), probably via the positive regulation of NAC019. Regulates female reproduction being required for entry into megasporogenesis, probably via the regulation of cell cycle genes. Plays a minor role in lateral roots (LRs) initiation. Involved complementarily in establishing the gravitropic set-point angles of lateral roots by regulating the transcription of PIN3 and PIN7 in gravity-sensing cells of primary and lateral roots. The protein is Transcription factor MYB88 of Arabidopsis thaliana (Mouse-ear cress).